The following is a 467-amino-acid chain: MSDDTTQIEPAMAQETSPRANTRKVFVKTYGCQMNVYDSQRMADSLAAEGYVATDTPDDADLVLLNTCHIREKASEKLYSALGRLRKMKDARAADGKELTIGVAGCVAQAEGQEILRRAPNVDLVIGPQTYHRLPNALARVRGGEKVVETDYAIEDKFEHLPAPRREETRKRGVSAFLTVQEGCDKFCTFCVVPYTRGSEVSRSVKQIVAEAERLADSGVRELTLLGQNVNAWHGEGEDGREWGLGELLFRLARIPGIARLRYTTSHPRDMDDSLIAAHRDLRQLMPYLHLPVQSGSDRILKAMNRRHKADEYLRLIERIRNVRPDMALSGDFIVGFPGETDQDFEDTMQLVRDVNYAQAYSFKYSPRPGTPGADLDDHVEEAVKDERLQRLQALLSAQQYAFQDSMIGRKMDVLLEKPGREAGQMVGRSPWLLPVIIDDNKDRVGDIIHVKIVSTGTNSLIAQKLA.

The disordered stretch occupies residues 1 to 20; that stretch reads MSDDTTQIEPAMAQETSPRA. The region spanning 23–143 is the MTTase N-terminal domain; the sequence is RKVFVKTYGC…LPNALARVRG (121 aa). Cysteine 32, cysteine 68, cysteine 106, cysteine 184, cysteine 188, and cysteine 191 together coordinate [4Fe-4S] cluster. Residues 170–402 enclose the Radical SAM core domain; it reads RKRGVSAFLT…QALLSAQQYA (233 aa). Residues 405-467 enclose the TRAM domain; that stretch reads DSMIGRKMDV…TNSLIAQKLA (63 aa).

The protein belongs to the methylthiotransferase family. MiaB subfamily. As to quaternary structure, monomer. [4Fe-4S] cluster serves as cofactor.

The protein resides in the cytoplasm. The catalysed reaction is N(6)-dimethylallyladenosine(37) in tRNA + (sulfur carrier)-SH + AH2 + 2 S-adenosyl-L-methionine = 2-methylsulfanyl-N(6)-dimethylallyladenosine(37) in tRNA + (sulfur carrier)-H + 5'-deoxyadenosine + L-methionine + A + S-adenosyl-L-homocysteine + 2 H(+). Catalyzes the methylthiolation of N6-(dimethylallyl)adenosine (i(6)A), leading to the formation of 2-methylthio-N6-(dimethylallyl)adenosine (ms(2)i(6)A) at position 37 in tRNAs that read codons beginning with uridine. This is tRNA-2-methylthio-N(6)-dimethylallyladenosine synthase from Brucella canis (strain ATCC 23365 / NCTC 10854 / RM-666).